A 212-amino-acid polypeptide reads, in one-letter code: Deoxyribose-phosphate aldolase (212 aa).

The Proton donor/acceptor role is filled by Asp89. The active-site Schiff-base intermediate with acetaldehyde is the Lys151. Lys180 serves as the catalytic Proton donor/acceptor.

Belongs to the DeoC/FbaB aldolase family. DeoC type 1 subfamily.

Its subcellular location is the cytoplasm. It catalyses the reaction 2-deoxy-D-ribose 5-phosphate = D-glyceraldehyde 3-phosphate + acetaldehyde. The protein operates within carbohydrate degradation; 2-deoxy-D-ribose 1-phosphate degradation; D-glyceraldehyde 3-phosphate and acetaldehyde from 2-deoxy-alpha-D-ribose 1-phosphate: step 2/2. Functionally, catalyzes a reversible aldol reaction between acetaldehyde and D-glyceraldehyde 3-phosphate to generate 2-deoxy-D-ribose 5-phosphate. The protein is Deoxyribose-phosphate aldolase of Clostridium botulinum (strain ATCC 19397 / Type A).